We begin with the raw amino-acid sequence, 71 residues long: 8.6 kDa protein (71 aa).

The chain is 8.6 kDa protein from Pseudomonas phage Pf1 (Bacteriophage Pf1).